A 229-amino-acid polypeptide reads, in one-letter code: Ras-related protein Rab-33B (229 aa).

GTP-binding residues include asparagine 43, valine 44, glycine 45, lysine 46, threonine 47, cysteine 48, threonine 62, and threonine 65. Residue threonine 47 coordinates Mg(2+). Residues 56 to 68 (GRFPDRTEATIGV) carry the Switch 1 motif. Positions 65 and 88 each coordinate Mg(2+). Residues 89-108 (TAGQERFRKSMVQHYYRNVH) carry the Switch 2 motif. Glycine 91, asparagine 148, lysine 149, aspartate 151, alanine 179, and lysine 180 together coordinate GTP. Residues cysteine 227 and cysteine 229 are each lipidated (S-geranylgeranyl cysteine). Cysteine 229 carries the cysteine methyl ester modification.

Belongs to the small GTPase superfamily. Rab family. Interacts (GTP- and GDP-bound forms) with ATG16L1; the complex consists of a tetramer where two RAB33B molecules bind independently one molecule of the ATG16L1 homodimer; the interaction promotes ATG12-ATG5-ATG16L1 complex recruitment to phagophores. Interacts with ATG16L2; however interaction is approximately hundred times lower than for ATG16L1. Interacts with RIC1 (via C-terminus domain); the interaction is direct with a preference for RAB33B-GTP. Interacts with RGP1. Mg(2+) is required as a cofactor. In terms of processing, prenylated.

The protein resides in the golgi apparatus membrane. The protein localises to the golgi apparatus. It localises to the cis-Golgi network. It is found in the preautophagosomal structure membrane. The catalysed reaction is GTP + H2O = GDP + phosphate + H(+). With respect to regulation, regulated by guanine nucleotide exchange factors (GEFs) which promote the exchange of bound GDP for free GTP. Regulated by GTPase activating proteins (GAPs) such as SGSM2 which increase the GTP hydrolysis activity. Inhibited by GDP dissociation inhibitors (GDIs). Functionally, the small GTPases Rab are key regulators of intracellular membrane trafficking, from the formation of transport vesicles to their fusion with membranes. Rabs cycle between an inactive GDP-bound form and an active GTP-bound form that is able to recruit to membranes different sets of downstream effectors directly responsible for vesicle formation, movement, tethering and fusion. RAB33B acts, in coordination with RAB6A, to regulate intra-Golgi retrograde trafficking. Participates in autophagosome formation by recruiting the ATG12-ATG5-ATG16L1 complex to phagophores, probably in a nucleotide-independent manner. The sequence is that of Ras-related protein Rab-33B (RAB33B) from Pongo abelii (Sumatran orangutan).